The chain runs to 218 residues: Probable signal peptidase I-2 (218 aa).

Topologically, residues 1-26 (MTENIVRETSKKKESPPENTWLELGK) are cytoplasmic. The helical transmembrane segment at 27–43 (TMVTAVILAIGIRTFVA) threads the bilayer. Topologically, residues 44 to 218 (EARYIPSSSM…ISPQTVPESR (175 aa)) are periplasmic. Residues S52 and K100 contribute to the active site.

Belongs to the peptidase S26 family.

The protein resides in the cell membrane. The enzyme catalyses Cleavage of hydrophobic, N-terminal signal or leader sequences from secreted and periplasmic proteins.. This is Probable signal peptidase I-2 (lepB2) from Synechocystis sp. (strain ATCC 27184 / PCC 6803 / Kazusa).